Consider the following 468-residue polypeptide: ATP synthase subunit beta (468 aa).

Residue 150 to 157 (GGAGVGKT) coordinates ATP.

It belongs to the ATPase alpha/beta chains family. F-type ATPases have 2 components, CF(1) - the catalytic core - and CF(0) - the membrane proton channel. CF(1) has five subunits: alpha(3), beta(3), gamma(1), delta(1), epsilon(1). CF(0) has three main subunits: a(1), b(2) and c(9-12). The alpha and beta chains form an alternating ring which encloses part of the gamma chain. CF(1) is attached to CF(0) by a central stalk formed by the gamma and epsilon chains, while a peripheral stalk is formed by the delta and b chains.

The protein resides in the cell inner membrane. It catalyses the reaction ATP + H2O + 4 H(+)(in) = ADP + phosphate + 5 H(+)(out). Produces ATP from ADP in the presence of a proton gradient across the membrane. The catalytic sites are hosted primarily by the beta subunits. This is ATP synthase subunit beta from Acidovorax ebreus (strain TPSY) (Diaphorobacter sp. (strain TPSY)).